The primary structure comprises 85 residues: Large ribosomal subunit protein bL27 (85 aa).

Positions 1–21 (MAHKKGVGSTRNGRDSDGQRL) are disordered.

This sequence belongs to the bacterial ribosomal protein bL27 family.

The chain is Large ribosomal subunit protein bL27 from Geotalea uraniireducens (strain Rf4) (Geobacter uraniireducens).